The sequence spans 308 residues: Peroxisomal targeting signal 2 receptor (308 aa).

WD repeat units follow at residues 57–88, 101–132, 145–176, 187–218, 231–262, and 274–306; these read DVED…RLFD, EHKA…KLWL, GSNS…KFWD, EIPN…YCYD, GHQL…RIFD, and LHSE…YIWN.

It belongs to the WD repeat peroxin-7 family. Interacts with PEX21.

It localises to the cytoplasm. Its subcellular location is the cytosol. The protein localises to the peroxisome matrix. Functionally, receptor required for the peroxisomal import of proteins containing a C-terminal PTS2-type peroxisomal targeting signal, such as 3-oxoacyl-CoA thiolase. Specifically binds to cargo proteins containing a PTS2 peroxisomal targeting signal in the cytosol. Cargo protein-binding triggers interaction with PEX21 and formation of a ternary complex composed of PEX21 and PEX7 along with PTS2-containing cargo proteins, which is tranlocated into peroxisomes by passing through the PEX13-PEX14 docking complex. The sequence is that of Peroxisomal targeting signal 2 receptor (pex7) from Schizosaccharomyces pombe (strain 972 / ATCC 24843) (Fission yeast).